A 1279-amino-acid chain; its full sequence is ATP-dependent helicase/nuclease subunit A (1279 aa).

Residues threonine 4–arginine 499 enclose the UvrD-like helicase ATP-binding domain. An ATP-binding site is contributed by alanine 25–threonine 32. The UvrD-like helicase C-terminal domain occupies glutamate 526 to glycine 853.

This sequence belongs to the helicase family. AddA subfamily. In terms of assembly, heterodimer of AddA and AddB/RexB. It depends on Mg(2+) as a cofactor.

It catalyses the reaction Couples ATP hydrolysis with the unwinding of duplex DNA by translocating in the 3'-5' direction.. It carries out the reaction ATP + H2O = ADP + phosphate + H(+). The heterodimer acts as both an ATP-dependent DNA helicase and an ATP-dependent, dual-direction single-stranded exonuclease. Recognizes the chi site generating a DNA molecule suitable for the initiation of homologous recombination. The AddA nuclease domain is required for chi fragment generation; this subunit has the helicase and 3' -&gt; 5' nuclease activities. In Clostridium botulinum (strain Hall / ATCC 3502 / NCTC 13319 / Type A), this protein is ATP-dependent helicase/nuclease subunit A.